A 429-amino-acid chain; its full sequence is Histidinol dehydrogenase (429 aa).

The NAD(+) site is built by tyrosine 127, glutamine 188, and asparagine 211. The substrate site is built by serine 234, glutamine 256, and histidine 259. Positions 256 and 259 each coordinate Zn(2+). Active-site proton acceptor residues include glutamate 324 and histidine 325. Histidine 325, aspartate 358, glutamate 412, and histidine 417 together coordinate substrate. Position 358 (aspartate 358) interacts with Zn(2+). Residue histidine 417 coordinates Zn(2+).

This sequence belongs to the histidinol dehydrogenase family. Requires Zn(2+) as cofactor.

It catalyses the reaction L-histidinol + 2 NAD(+) + H2O = L-histidine + 2 NADH + 3 H(+). It participates in amino-acid biosynthesis; L-histidine biosynthesis; L-histidine from 5-phospho-alpha-D-ribose 1-diphosphate: step 9/9. In terms of biological role, catalyzes the sequential NAD-dependent oxidations of L-histidinol to L-histidinaldehyde and then to L-histidine. The sequence is that of Histidinol dehydrogenase from Bacillus cereus (strain ATCC 10987 / NRS 248).